The sequence spans 370 residues: Leucine-rich repeat and transmembrane domain-containing protein 2 (370 aa).

Residues 1–35 (MLAPGSSPGQRGRLALQWRQVSWITCWIALYAVEA) form the signal peptide. One can recognise an LRRNT domain in the interval 36–68 (LPTCPFSCKCDSRSLEVDCSGLGLTTVPPDVPA). Residues 36-310 (LPTCPFSCKC…PASVRRAMGT (275 aa)) lie on the Extracellular side of the membrane. 5 LRR repeats span residues 69–90 (ATRTLLLLNNKLSALPSWAFAN), 93–114 (SLQRLDLSNNFLDRLPRSIFGD), 117–139 (NLTELQLRNNSIRTLDRDLLRHS), 141–162 (LLRHLDLSINGLAQLPPGLFDG), and 165–186 (ALRSLSLRSNRLQNLDRLTFEP). N-linked (GlcNAc...) asparagine glycosylation is present at N90. N117 and N125 each carry an N-linked (GlcNAc...) asparagine glycan. The 55-residue stretch at 198 to 252 (NPWECDCNLREFKHWMEWFSYRGGRLDQLACTLPKELRGKDMRMVPMEMFNYCSQ) folds into the LRRCT domain. The N-linked (GlcNAc...) asparagine glycan is linked to N257. The disordered stretch occupies residues 261-300 (GLDIPGPPCTKASPEPAKPKPGAEPEPEPSTACPQKQRHR). The chain crosses the membrane as a helical span at residues 311 to 331 (VIIAGVVCGVVCIMMVVAAAY). The Cytoplasmic portion of the chain corresponds to 332-370 (GCIYASLMAKYHRELKKRQPLMGDPEGEHEDQKQISSVA). A disordered region spans residues 351 to 370 (PLMGDPEGEHEDQKQISSVA).

The protein localises to the membrane. This Homo sapiens (Human) protein is Leucine-rich repeat and transmembrane domain-containing protein 2 (LRTM2).